Here is a 160-residue protein sequence, read N- to C-terminus: Dr hemagglutinin structural subunit (160 aa).

Residues 1-21 (MKKLAIMAAASMVFAVSSAHA) form the signal peptide. The segment at 22–75 (GFTPSGTTGTTKLTVTEECQVRVGDLTVAKTRGQLTDAAPIGPVTVQALGCDAR) is receptor-binding.

The protein belongs to the Dr-adhesin family.

It localises to the fimbrium. In terms of biological role, hemagglutinins of uropathogenic E.coli mediate adherence to the upper urinary tract. These adhesins bind to the Dr blood group antigen and also agglutinate human erythrocytes in the presence of D-mannose (mannose-resistant hemagglutination (MRHA)). The protein is Dr hemagglutinin structural subunit (draA) of Escherichia coli.